A 120-amino-acid polypeptide reads, in one-letter code: Myohemerythrin (120 aa).

Fe cation is bound by residues His-26, His-56, Glu-60, His-75, His-79, His-108, and Asp-113.

Belongs to the hemerythrin family.

In terms of biological role, myohemerythrin is an oxygen-binding protein found in the retractor muscles of certain worms. The oxygen-binding site contains two iron atoms. This Sipunculus nudus (Sipunculan worm) protein is Myohemerythrin.